Here is a 143-residue protein sequence, read N- to C-terminus: Submaxillary gland androgen-regulated protein 2, isoform delta (143 aa).

Positions 1 to 22 (MKPLCLVFGLCVLIGCFLSSEC) are cleaved as a signal peptide. 2 disordered regions span residues 28 to 52 (GQHDPTRPLSPSNPSSHFYPQPDPN) and 116 to 143 (VPRKKSNATPAANNFITTATAPNSTDSF). Polar residues-rich tracts occupy residues 36–45 (LSPSNPSSHF) and 122–143 (NATPAANNFITTATAPNSTDSF).

It is found in the secreted. May play a role in protection or detoxification. The protein is Submaxillary gland androgen-regulated protein 2, isoform delta (Smr2) of Mus musculus (Mouse).